The chain runs to 426 residues: Glucan endo-1,3-beta-glucosidase 11 (426 aa).

An N-terminal signal peptide occupies residues 1 to 30; the sequence is MELTSFHRSSLLFLISLTLIILPTTTTSIG. Asn112 carries an N-linked (GlcNAc...) asparagine glycan. Catalysis depends on Glu121, which acts as the Proton donor. Asn126 is a glycosylation site (N-linked (GlcNAc...) asparagine). The active-site Nucleophile is Glu266. The segment covering 360–372 has biased composition (gly residues); it reads GGGTGGGNSSSGG. A disordered region spans residues 360 to 389; that stretch reads GGGTGGGNSSSGGGRDKSPVFPVSPVAPDS. A glycan (N-linked (GlcNAc...) asparagine) is linked at Asn367. Ser398 carries GPI-anchor amidated serine lipidation. Residues 399 to 426 constitute a propeptide, removed in mature form; sequence ASPVTGKRKGKGAILSLVVSMLLARHLL.

Belongs to the glycosyl hydrolase 17 family.

It is found in the secreted. The protein resides in the cell wall. It localises to the cell membrane. It carries out the reaction Hydrolysis of (1-&gt;3)-beta-D-glucosidic linkages in (1-&gt;3)-beta-D-glucans.. This Arabidopsis thaliana (Mouse-ear cress) protein is Glucan endo-1,3-beta-glucosidase 11.